Consider the following 267-residue polypeptide: Trehalose 2-sulfotransferase (267 aa).

Alpha,alpha-trehalose-binding positions include glutamine 14, glutamate 33–glutamine 39, proline 48, and tryptophan 53. The active-site Proton acceptor is the glutamate 36.

It belongs to the Stf0 sulfotransferase family. In terms of assembly, homodimer.

The catalysed reaction is alpha,alpha-trehalose + 3'-phosphoadenylyl sulfate = 2-O-sulfo-alpha,alpha-trehalose + adenosine 3',5'-bisphosphate + H(+). It functions in the pathway glycolipid metabolism. In terms of biological role, catalyzes the sulfuryl group transfer from 3'-phosphoadenosine-5'-phosphosulfate (PAPS) to trehalose, leading to trehalose-2-sulfate (T2S). The sulfation of trehalose is the first step in the biosynthesis of sulfolipid-1 (SL-1), a major cell wall glycolipid in pathogenic mycobacteria. Cannot use free glucose and unnatural stereoisomers of trehalose (alpha,beta (neo-trehalose) and beta,beta (iso-trehalose)) as substrates. The protein is Trehalose 2-sulfotransferase of Mycolicibacterium smegmatis (strain ATCC 700084 / mc(2)155) (Mycobacterium smegmatis).